The primary structure comprises 449 residues: Hyaluronidase-3 (449 aa).

A signal peptide spans 1 to 23 (MYHIWIKFLAAWIFLKKFNGVHV). 2 disulfide bridges follow: cysteine 47/cysteine 340 and cysteine 211/cysteine 227. N-linked (GlcNAc...) asparagine glycosylation is found at asparagine 67, asparagine 103, and asparagine 111. Catalysis depends on glutamate 135, which acts as the Proton donor. Asparagine 153 carries N-linked (GlcNAc...) asparagine glycosylation. Asparagine 357 carries N-linked (GlcNAc...) asparagine glycosylation. Cystine bridges form between cysteine 365–cysteine 376, cysteine 370–cysteine 427, and cysteine 429–cysteine 438. N-linked (GlcNAc...) asparagine glycosylation is present at asparagine 401. The EGF-like domain occupies 427–438 (CQCYQGWKGLYC).

The protein belongs to the glycosyl hydrolase 56 family. As to quaternary structure, monomer. As to expression, expressed by the venom gland.

Its subcellular location is the secreted. It carries out the reaction Random hydrolysis of (1-&gt;4)-linkages between N-acetyl-beta-D-glucosamine and D-glucuronate residues in hyaluronate.. In terms of biological role, snake venom endo-hyaluronidase that degrades hyaluronan to smaller oligosaccharide fragments. In venom, it is not toxic by itself, but increases the diffusion of other venom proteins by degrading the extracellular matrix. In addition, it displays antiedematogenic activity. The protein is Hyaluronidase-3 of Cerastes cerastes (Horned desert viper).